The sequence spans 476 residues: WD repeat, SAM and U-box domain-containing protein 1 (476 aa).

WD repeat units follow at residues 10–47, 52–91, 95–134, 137–176, 178–227, 237–276, and 279–318; these read DHSD…ELPY, GHTY…MLAV, PTGS…FYRS, VKDG…LCNE, AHDL…FLGG, GHSA…ILHT, and QHTR…PCAG. The SAM domain maps to 333 to 396; the sequence is WSEDDVSAWL…LQKIEELRMK (64 aa). The region spanning 403 to 476 is the U-box domain; it reads AVPDEFLCPI…ISRWLETQQK (74 aa).

This chain is WD repeat, SAM and U-box domain-containing protein 1 (WDSUB1), found in Gallus gallus (Chicken).